We begin with the raw amino-acid sequence, 724 residues long: Propionyl-CoA carboxylase alpha chain, mitochondrial (724 aa).

Residues 1-48 (MAGQWVRTVALLAARRHWRRSSQQQLLGTLKHAPVYSYQCLVVSRSLS) constitute a mitochondrion transit peptide. Residues 58–505 (TFDKILIANR…STKFLSDVYP (448 aa)) form the Biotin carboxylation domain. The residue at position 61 (Lys61) is an N6-acetyllysine; alternate. Position 61 is an N6-succinyllysine; alternate (Lys61). Lys115 carries the N6-succinyllysine modification. Lys146 is subject to N6-acetyllysine; alternate. The residue at position 146 (Lys146) is an N6-succinyllysine; alternate. Residue Lys150 is modified to N6-acetyllysine. ATP is bound at residue Lys173. The ATP-grasp domain occupies 177 to 374 (KLLAKRAKVN…LVQEMILVAK (198 aa)). Lys184 bears the N6-succinyllysine mark. Lys196 is modified (N6-acetyllysine; alternate). Residue Lys196 is modified to N6-succinyllysine; alternate. ATP-binding positions include 205-266 (AREI…PRHI), Glu257, and Asn292. At Ser248 the chain carries Phosphoserine. At Lys258 the chain carries N6-succinyllysine. N6-acetyllysine; alternate is present on Lys324. At Lys324 the chain carries N6-succinyllysine; alternate. Mg(2+) contacts are provided by Glu332, Glu345, and Asn347. Mn(2+)-binding residues include Glu332, Glu345, and Asn347. Arg349 is a catalytic residue. N6-succinyllysine is present on residues Lys381 and Lys403. A biotin-binding site is contributed by Phe405. An N6-acetyllysine modification is found at Lys492. Lys498, Lys509, Lys554, and Lys644 each carry N6-succinyllysine. Residues 645 to 724 (FMLEKVPKDT…GEGDLLVELE (80 aa)) form the Biotinyl-binding domain. N6-biotinyllysine; by HLCS is present on Lys690.

As to quaternary structure, the holoenzyme is a dodecamer composed of 6 PCCA/alpha subunits and 6 PCCB/beta subunits. Interacts (via the biotin carboxylation domain) with SIRT4. Interacts with SIRT3 and SIRT5. The cofactor is Mg(2+). It depends on Mn(2+) as a cofactor. Biotin serves as cofactor. Acetylated. Post-translationally, the biotin cofactor is covalently attached to the C-terminal biotinyl-binding domain and is required for the catalytic activity. Biotinylation is catalyzed by HLCS.

The protein localises to the mitochondrion matrix. It catalyses the reaction propanoyl-CoA + hydrogencarbonate + ATP = (S)-methylmalonyl-CoA + ADP + phosphate + H(+). The enzyme catalyses butanoyl-CoA + hydrogencarbonate + ATP = (2S)-ethylmalonyl-CoA + ADP + phosphate + H(+). It functions in the pathway metabolic intermediate metabolism; propanoyl-CoA degradation; succinyl-CoA from propanoyl-CoA: step 1/3. Functionally, this is one of the 2 subunits of the biotin-dependent propionyl-CoA carboxylase (PCC), a mitochondrial enzyme involved in the catabolism of odd chain fatty acids, branched-chain amino acids isoleucine, threonine, methionine, and valine and other metabolites. Propionyl-CoA carboxylase catalyzes the carboxylation of propionyl-CoA/propanoyl-CoA to D-methylmalonyl-CoA/(S)-methylmalonyl-CoA. Within the holoenzyme, the alpha subunit catalyzes the ATP-dependent carboxylation of the biotin carried by the biotin carboxyl carrier (BCC) domain, while the beta subunit then transfers the carboxyl group from carboxylated biotin to propionyl-CoA. Propionyl-CoA carboxylase also significantly acts on butyryl-CoA/butanoyl-CoA, which is converted to ethylmalonyl-CoA/(2S)-ethylmalonyl-CoA. Other alternative minor substrates include (2E)-butenoyl-CoA/crotonoyl-CoA. The protein is Propionyl-CoA carboxylase alpha chain, mitochondrial of Mus musculus (Mouse).